Here is a 539-residue protein sequence, read N- to C-terminus: Phosphoenolpyruvate carboxykinase (ATP) (539 aa).

The substrate site is built by arginine 64, tyrosine 206, and lysine 212. ATP contacts are provided by residues lysine 212, histidine 231, and 247–255 (GLSGTGKTT). Mn(2+)-binding residues include lysine 212 and histidine 231. A Mn(2+)-binding site is contributed by aspartate 268. ATP contacts are provided by residues glutamate 296, arginine 332, 448–449 (RI), and threonine 454. Arginine 332 is a substrate binding site.

Belongs to the phosphoenolpyruvate carboxykinase (ATP) family. In terms of assembly, monomer. Mn(2+) serves as cofactor.

The protein localises to the cytoplasm. It carries out the reaction oxaloacetate + ATP = phosphoenolpyruvate + ADP + CO2. Its pathway is carbohydrate biosynthesis; gluconeogenesis. Its function is as follows. Involved in the gluconeogenesis. Catalyzes the conversion of oxaloacetate (OAA) to phosphoenolpyruvate (PEP) through direct phosphoryl transfer between the nucleoside triphosphate and OAA. This chain is Phosphoenolpyruvate carboxykinase (ATP), found in Edwardsiella ictaluri (strain 93-146).